Here is an 855-residue protein sequence, read N- to C-terminus: Nuclear valosin-containing protein-like (855 aa).

The segment at 1–219 (MKPRPGVFVD…SLLESDKKRK (219 aa)) is interaction with RPL5. The short motif at 49–52 (RRKR) is the Nucleolar localization signal element. Lys70 is modified (N6-acetyllysine). Residues 83-234 (LAKRARQDEE…KGNKRKTENL (152 aa)) are disordered. The Nuclear localization signal signature appears at 85–88 (KRAR). Residues 90–110 (DEEDEYTESYSDDDSNMEDYP) show a composition bias toward acidic residues. Polar residues-rich tracts occupy residues 113 to 123 (QSANPMNSSLL) and 131 to 157 (SESV…SKTG). Residue Ser133 is modified to Phosphoserine. Residue Thr137 is modified to Phosphothreonine. Lys155 bears the N6-acetyllysine mark. Ser190 is subject to Phosphoserine. Residue Lys207 forms a Glycyl lysine isopeptide (Lys-Gly) (interchain with G-Cter in SUMO2) linkage. 2 positions are modified to phosphoserine: Ser210 and Ser214. The span at 217–228 (KRKGRAKGKGNK) shows a compositional bias: basic residues. Residues 217–231 (KRKGRAKGKGNKRKT) carry the Nuclear localization signal motif. The tract at residues 266–473 (VGGNDATLKE…LTPGFVGADL (208 aa)) is interaction with WDR74. 304-311 (GPPGCGKT) contacts ATP. Residues 496–523 (QKKKPEIEGLPSEGDQEERLGAEPTSET) are disordered. 621 to 628 (GPPGCGKT) contacts ATP.

Belongs to the AAA ATPase family. In terms of assembly, interacts with NCL/nucleolin. Isoform 1 and isoform 2 interact with TERT and isoform 1 exhibits a higher binding affinity for TERT compared to isoform 2. Isoform 1 interacts with MTREX in an ATP-dependent manner; the interaction is required to associate NVL with nuclear RNA exosome. Isoform 1 interacts with RPL5 in an ATP-dependent manner. Interacts with WDR74 (through WDR repeats); the interaction is independent of RNA or pre-60S ribosome particles.

It is found in the nucleus. Its subcellular location is the nucleolus. The protein localises to the nucleoplasm. In terms of biological role, participates in the assembly of the telomerase holoenzyme and effecting of telomerase activity via its interaction with TERT. Involved in both early and late stages of the pre-rRNA processing pathways. Spatiotemporally regulates 60S ribosomal subunit biogenesis in the nucleolus. Catalyzes the release of specific assembly factors, such as WDR74, from pre-60S ribosomal particles through the ATPase activity. In Mus musculus (Mouse), this protein is Nuclear valosin-containing protein-like.